The chain runs to 977 residues: DNA-directed RNA polymerase 3A, chloroplastic (977 aa).

Residues 1–72 (MASTASYSPS…NNIQSQTTVC (72 aa)) constitute a chloroplast transit peptide. Catalysis depends on residues Asp-678, Lys-753, and Asp-910.

The protein belongs to the phage and mitochondrial RNA polymerase family.

The protein localises to the plastid. The protein resides in the chloroplast. It carries out the reaction RNA(n) + a ribonucleoside 5'-triphosphate = RNA(n+1) + diphosphate. Its function is as follows. DNA-dependent RNA polymerase catalyzes the transcription of DNA into RNA using the four ribonucleoside triphosphates as substrates. The sequence is that of DNA-directed RNA polymerase 3A, chloroplastic (RPOT3-SYL) from Nicotiana tabacum (Common tobacco).